A 360-amino-acid polypeptide reads, in one-letter code: Pyrimidine monooxygenase RutA (360 aa).

FMN-binding positions include 49 to 50 (IK), Asn115, Glu124, 140 to 141 (RY), and Ser190.

It belongs to the NtaA/SnaA/DszA monooxygenase family. RutA subfamily.

It catalyses the reaction uracil + FMNH2 + NADH + O2 = (Z)-3-ureidoacrylate + FMN + NAD(+) + H2O + H(+). It carries out the reaction thymine + FMNH2 + NADH + O2 = (Z)-2-methylureidoacrylate + FMN + NAD(+) + H2O + H(+). Functionally, catalyzes the pyrimidine ring opening between N-3 and C-4 by an unusual flavin hydroperoxide-catalyzed mechanism, adding oxygen atoms in the process to yield ureidoacrylate peracid, that immediately reacts with FMN forming ureidoacrylate and FMN-N(5)-oxide. The FMN-N(5)-oxide reacts spontaneously with NADH to produce FMN. Requires the flavin reductase RutF to regenerate FMN in vivo. This is Pyrimidine monooxygenase RutA from Bradyrhizobium sp. (strain BTAi1 / ATCC BAA-1182).